The primary structure comprises 371 residues: MSVSIVREQSITISDGIRLDSGRILAPITIAYETYGTLNTDASNAILVEHAWTGSAHLAGKQSENDTKPGWWDAIVGPGRLLDTDRYFVICSNVIGSCFGSTGPASINPKTGKRYNLTFPVITIRDMVRAQKLLIEMLGIRRLLSVMGGSMGGMQTLEWITQYPDAIASAVLLATTPRPSPLAISMNAIARWSIFNDPTWRKGEYKNNPKDGLALARAIGHITFLSDESMQAKFGRKFSARDGQFDFFGQFEVERYLDYNGYSFVSRFDANSFLYLAKALDLYDVSWGYESMAEAFARVSAPLQFFAFSSDWLYPPGQTEEMVSCLRKLGKEVEYHLISSSYGHDAFLLEHEAFSPLVKRFLDAAYAKGGQ.

Positions Asn-44–Glu-350 constitute an AB hydrolase-1 domain. Catalysis depends on Ser-150, which acts as the Nucleophile. Substrate is bound at residue Arg-217. Residues Asp-311 and His-344 contribute to the active site. Substrate is bound at residue Asp-345.

It belongs to the AB hydrolase superfamily. MetX family. In terms of assembly, homodimer.

Its subcellular location is the cytoplasm. The enzyme catalyses L-homoserine + acetyl-CoA = O-acetyl-L-homoserine + CoA. It functions in the pathway amino-acid biosynthesis; L-methionine biosynthesis via de novo pathway; O-acetyl-L-homoserine from L-homoserine: step 1/1. Its function is as follows. Transfers an acetyl group from acetyl-CoA to L-homoserine, forming acetyl-L-homoserine. This Pelobacter propionicus (strain DSM 2379 / NBRC 103807 / OttBd1) protein is Homoserine O-acetyltransferase.